Here is a 173-residue protein sequence, read N- to C-terminus: Large ribosomal subunit protein uL10 (173 aa).

Belongs to the universal ribosomal protein uL10 family. In terms of assembly, part of the ribosomal stalk of the 50S ribosomal subunit. The N-terminus interacts with L11 and the large rRNA to form the base of the stalk. The C-terminus forms an elongated spine to which L12 dimers bind in a sequential fashion forming a multimeric L10(L12)X complex.

Functionally, forms part of the ribosomal stalk, playing a central role in the interaction of the ribosome with GTP-bound translation factors. This chain is Large ribosomal subunit protein uL10, found in Chlorobaculum parvum (strain DSM 263 / NCIMB 8327) (Chlorobium vibrioforme subsp. thiosulfatophilum).